The chain runs to 411 residues: Argininosuccinate synthase (411 aa).

ATP is bound by residues 10 to 18 (AYSGGLDTS) and Ala37. L-citrulline is bound by residues Tyr89 and Ser94. ATP is bound at residue Gly119. Positions 121, 125, and 126 each coordinate L-aspartate. Asn125 is an L-citrulline binding site. Residues Arg129, Ser178, Ser187, Glu263, and Tyr275 each coordinate L-citrulline.

The protein belongs to the argininosuccinate synthase family. Type 1 subfamily. Homotetramer.

It is found in the cytoplasm. The enzyme catalyses L-citrulline + L-aspartate + ATP = 2-(N(omega)-L-arginino)succinate + AMP + diphosphate + H(+). It participates in amino-acid biosynthesis; L-arginine biosynthesis; L-arginine from L-ornithine and carbamoyl phosphate: step 2/3. This is Argininosuccinate synthase from Aeromonas hydrophila subsp. hydrophila (strain ATCC 7966 / DSM 30187 / BCRC 13018 / CCUG 14551 / JCM 1027 / KCTC 2358 / NCIMB 9240 / NCTC 8049).